Consider the following 273-residue polypeptide: Flagellin FljM (273 aa).

Belongs to the bacterial flagellin family. In C.crescentus, the flagellar filament is composed of multiple flagellins of 29 kDa; 27 kDa and 25 kDa.

The protein localises to the secreted. Its subcellular location is the bacterial flagellum. Flagellin is the subunit protein which polymerizes to form the filaments of bacterial flagella. The sequence is that of Flagellin FljM (fljM) from Caulobacter vibrioides (strain ATCC 19089 / CIP 103742 / CB 15) (Caulobacter crescentus).